The chain runs to 124 residues: Small ribosomal subunit protein bS6 (124 aa).

The tract at residues 96–124 (ETGPSPMMKEVQREEAKKAAAAQPTEAQA) is disordered. Positions 114–124 (AAAAQPTEAQA) are enriched in low complexity.

This sequence belongs to the bacterial ribosomal protein bS6 family.

In terms of biological role, binds together with bS18 to 16S ribosomal RNA. This is Small ribosomal subunit protein bS6 from Burkholderia lata (strain ATCC 17760 / DSM 23089 / LMG 22485 / NCIMB 9086 / R18194 / 383).